Here is a 600-residue protein sequence, read N- to C-terminus: NADPH-dependent diflavin oxidoreductase 1 (600 aa).

Positions 6–150 constitute a Flavodoxin-like domain; it reads LLILYGSQTG…VVDPWLKDLW (145 aa). FMN contacts are provided by residues 12–17, 59–62, 97–106, and Asp-132; these read SQTGTA, ATTG, and LGDSSYPKFN. Residues 210–449 form the FAD-binding FR-type domain; the sequence is IHPFLAPVLS…WVKKGSMKFP (240 aa). FAD is bound by residues Arg-354, 386-389, and 420-423; these read RAFS and GLCS. Residues Thr-463, 518–519, and 524–528 contribute to the NADP(+) site; these read SR and KIYVQ. Residue Trp-599 coordinates FAD.

This sequence belongs to the NADPH-dependent diflavin oxidoreductase NDOR1 family. It in the N-terminal section; belongs to the flavodoxin family. The protein in the C-terminal section; belongs to the flavoprotein pyridine nucleotide cytochrome reductase family. As to quaternary structure, interacts with ciapin1; as part of the cytosolic iron-sulfur (Fe-S) protein assembly (CIA) machinery. FAD serves as cofactor. FMN is required as a cofactor.

It is found in the cytoplasm. Its subcellular location is the perinuclear region. It carries out the reaction 2 oxidized [2Fe-2S]-[protein] + NADPH = 2 reduced [2Fe-2S]-[protein] + NADP(+) + H(+). In terms of biological role, NADPH-dependent reductase which is a central component of the cytosolic iron-sulfur (Fe-S) protein assembly (CIA) machinery. Transfers electrons from NADPH via its FAD and FMN prosthetic groups to the [2Fe-2S] cluster of ciapin1, another key component of the CIA machinery. In turn, this reduced cluster provides electrons for assembly of cytosolic iron-sulfur cluster proteins. It can also reduce the [2Fe-2S] cluster of cisd1 and activate this protein implicated in Fe/S cluster repair. This is NADPH-dependent diflavin oxidoreductase 1 from Xenopus laevis (African clawed frog).